A 466-amino-acid chain; its full sequence is Putative outer membrane protein NMB0088 (466 aa).

The first 24 residues, 1 to 24, serve as a signal peptide directing secretion; sequence MTPSALKKTVLLLGTAFAAASVHA.

The protein belongs to the OmpP1/FadL family.

The protein localises to the cell outer membrane. This chain is Putative outer membrane protein NMB0088, found in Neisseria meningitidis serogroup B (strain ATCC BAA-335 / MC58).